A 642-amino-acid polypeptide reads, in one-letter code: Bud site selection protein 5 (642 aa).

Residues E224 to K339 enclose the N-terminal Ras-GEF domain. The region spanning S412–R640 is the Ras-GEF domain.

As to quaternary structure, interacts with AXL2, BEM1, GSP1 and in haploid cells with AXL1.

It is found in the bud neck. Its subcellular location is the cytoplasm. The protein localises to the cell cortex. GDP-GTP exchange factor (GEF) for the small GTPase BUD1/RSR1. Regulates the activity of BUD1 together with BUD2 which is a GTPase-activating protein (GAP) of BUD1. Required to produce both the axial and bipolar patterns of bud site selection. Determines the orientation of division axis. Overexpression can suppress mutations in PRP20 which is the GEF for GSP1. May be a cytoplasmic GEF for GSP1. Might also act on the Ras-like protein CDC42. Appears to bind to Ras proteins but not to activate them. This is Bud site selection protein 5 (BUD5) from Saccharomyces cerevisiae (strain ATCC 204508 / S288c) (Baker's yeast).